We begin with the raw amino-acid sequence, 182 residues long: CDP-diacylglycerol--glycerol-3-phosphate 3-phosphatidyltransferase (182 aa).

Residues 2–12 lie on the Cytoplasmic side of the membrane; it reads QFNIPTLLTLF. Residues 13-37 traverse the membrane as a helical segment; it reads RVILIPFLVVVFYLPFAWAPMVSAL. The Periplasmic portion of the chain corresponds to 38–60; the sequence is IFCIAAITDWFDGFLARRWNQST. A helical membrane pass occupies residues 61–81; that stretch reads RFGAFLDPVADKVLVAIAMVL. Residues 82 to 86 are Cytoplasmic-facing; the sequence is VTEHY. Residues 87 to 107 form a helical membrane-spanning segment; that stretch reads HSWWVTLPAATMIAREIIISA. Residues 108–145 lie on the Periplasmic side of the membrane; that stretch reads LREWMAELGKRSSVAVSWIGKVKTTAQMVALAWLLWRP. A helical transmembrane segment spans residues 146-168; the sequence is NIWVEYAGIALFFVAAVLTLWSM. The Cytoplasmic segment spans residues 169–181; it reads LQYLSAARGDLLD.

This sequence belongs to the CDP-alcohol phosphatidyltransferase class-I family.

It localises to the cell inner membrane. The catalysed reaction is a CDP-1,2-diacyl-sn-glycerol + sn-glycerol 3-phosphate = a 1,2-diacyl-sn-glycero-3-phospho-(1'-sn-glycero-3'-phosphate) + CMP + H(+). The protein operates within phospholipid metabolism; phosphatidylglycerol biosynthesis; phosphatidylglycerol from CDP-diacylglycerol: step 1/2. Catalyzes the conversion of cytidine diphosphate diacylglycerol (CDP-DG) and glycerol 3-phosphate into phosphatidylglycerol. Essential for the synthesis of anionic phospholipids, thereby playing a role in balancing the ratio of zwitterionic and anionic phospholipids, which is thought to be important for normal membrane function. This chain is CDP-diacylglycerol--glycerol-3-phosphate 3-phosphatidyltransferase, found in Salmonella choleraesuis (strain SC-B67).